We begin with the raw amino-acid sequence, 1411 residues long: ATP-dependent permease PDR11 (1411 aa).

Topologically, residues 2-388 are cytoplasmic; the sequence is SLSKYFNPIP…IGDRNYLISQ (387 aa). In terms of domain architecture, ABC transporter 1 spans 31–273; it reads VQNDEESASE…FHDTLQIKKN (243 aa). A helical membrane pass occupies residues 389–409; it reads FVSVVVQSLVIGSLFYNIPLT. Topologically, residues 410-418 are extracellular; that stretch reads TIGSFSRGS. The helical transmembrane segment at 419-439 threads the bilayer; it reads LTFFSILFFTFLSLADMPASF. Residues 440 to 471 are Cytoplasmic-facing; that stretch reads QRQPVVRKHVQLHFYYNWVETLATNFFDCCSK. The chain crosses the membrane as a helical span at residues 472-492; sequence FILVVIFTIILYFLAHLQYNA. Over 493–494 the chain is Extracellular; that stretch reads AR. A helical membrane pass occupies residues 495–515; it reads FFIFLLFLSVYNFCMVSLFAL. Residues 516–524 lie on the Cytoplasmic side of the membrane; the sequence is TALIAPTLS. A helical membrane pass occupies residues 525 to 545; the sequence is MANLLAGILLLAIAMYASYVI. At 546-636 the chain is on the extracellular side; the sequence is YMKDMHPWFI…YTYHHVWRNF (91 aa). Asn-595 carries an N-linked (GlcNAc...) asparagine glycan. The chain crosses the membrane as a helical span at residues 637–657; the sequence is GIIIGFLCFFLFCSLLAAEYI. Residues 658 to 1090 are Cytoplasmic-facing; sequence TPLFTRENLL…QYICTKRDMT (433 aa). The region spanning 751 to 979 is the ABC transporter 2 domain; sequence ISWKNINYTI…FVAHDRRLTF (229 aa). An ATP-binding site is contributed by 782 to 789; the sequence is GESGAGKT. Residues 1091 to 1111 form a helical membrane-spanning segment; the sequence is YVFAKYALNAGAGLFIGFSFW. The Extracellular portion of the chain corresponds to 1112–1117; the sequence is RTKHNI. A helical transmembrane segment spans residues 1118 to 1138; sequence NGLQDAIFLCFMMLCVSSPLI. The Cytoplasmic segment spans residues 1139–1175; the sequence is NQVQDKALQSKEVYIAREARSNTYHWTVLLIAQTIVE. Residues 1176 to 1196 form a helical membrane-spanning segment; it reads LPLAISSSTLFFLCCYFCCGF. Residues 1197 to 1204 are Extracellular-facing; it reads ETSARVAG. Residues 1205–1225 traverse the membrane as a helical segment; that stretch reads VFYLNYILFSMYYLSFGLWLL. Topologically, residues 1226-1230 are cytoplasmic; that stretch reads YSAPD. A helical membrane pass occupies residues 1231–1251; the sequence is LQTAAVFVAFLYSFTASFCGV. Over 1252 to 1355 the chain is Extracellular; sequence MQPYSLFPRF…NMSYHHRWRN (104 aa). 3 N-linked (GlcNAc...) asparagine glycosylation sites follow: Asn-1289, Asn-1324, and Asn-1346. The chain crosses the membrane as a helical span at residues 1356–1376; it reads FGFEWVFVCFNIAAMFVGFYL. The Cytoplasmic portion of the chain corresponds to 1377–1411; that stretch reads TYIKKIWPSVIDGIKKCIPSMRRSKTSHNPNEQSV.

It belongs to the ABC transporter superfamily. ABCG family. PDR (TC 3.A.1.205) subfamily.

It localises to the membrane. Functionally, transporter involved in the uptake of sterol. The sequence is that of ATP-dependent permease PDR11 (PDR11) from Saccharomyces cerevisiae (strain ATCC 204508 / S288c) (Baker's yeast).